The primary structure comprises 534 residues: SWI/SNF complex component SNF12 homolog (534 aa).

The segment covering 1 to 12 (MSGNNNNPQKPQ) has biased composition (polar residues). Disordered stretches follow at residues 1–33 (MSGN…PGNQ) and 78–132 (MTMN…SPMR). Residues 94–105 (PSSPSLTTPGSL) show a composition bias toward low complexity. An SWIB/MDM2 domain is found at 314-391 (YVPEKFKLST…SQKISHHLSP (78 aa)).

This sequence belongs to the SMARCD family. As to quaternary structure, part of a SWI-SNF complex.

It is found in the nucleus. In terms of biological role, involved in transcriptional activation and repression of select genes by chromatin remodeling (alteration of DNA-nucleosome topology). The chain is SWI/SNF complex component SNF12 homolog from Arabidopsis thaliana (Mouse-ear cress).